Here is a 156-residue protein sequence, read N- to C-terminus: Ribosomal RNA large subunit methyltransferase H (156 aa).

Leucine 72 and glycine 104 together coordinate S-adenosyl-L-methionine.

The protein belongs to the RNA methyltransferase RlmH family. In terms of assembly, homodimer.

Its subcellular location is the cytoplasm. It carries out the reaction pseudouridine(1915) in 23S rRNA + S-adenosyl-L-methionine = N(3)-methylpseudouridine(1915) in 23S rRNA + S-adenosyl-L-homocysteine + H(+). Specifically methylates the pseudouridine at position 1915 (m3Psi1915) in 23S rRNA. The protein is Ribosomal RNA large subunit methyltransferase H of Maricaulis maris (strain MCS10) (Caulobacter maris).